We begin with the raw amino-acid sequence, 193 residues long: MSTMLIAVILLTLLALFFGVLLGFAALKFKVEGNPIVDELEAILPQTQCGQCGYPGCRPYAEAIANGDKVNKCPPGGTATMEKLANLMGVEPEPLNAEAQSQVKKVAYIREDECIGCTKCIQACPVDAIIGAGKLMHTVLTADCTGCDLCVEPCPVDCIDMIPVGQNLKNWNWRLNAIPVTLIQETPHEEKRG.

Residues 1-26 (MSTMLIAVILLTLLALFFGVLLGFAA) form a hydrophobic region. The 59-residue stretch at 32 to 90 (EGNPIVDELEAILPQTQCGQCGYPGCRPYAEAIANGDKVNKCPPGGTATMEKLANLMGV) folds into the 4Fe-4S domain. Cysteine 49, cysteine 52, cysteine 57, cysteine 73, cysteine 114, cysteine 117, cysteine 120, cysteine 124, cysteine 144, cysteine 147, cysteine 150, and cysteine 154 together coordinate [4Fe-4S] cluster. 4Fe-4S ferredoxin-type domains follow at residues 105–134 (KVAYIREDECIGCTKCIQACPVDAIIGAGK) and 136–164 (MHTVLTADCTGCDLCVEPCPVDCIDMIPV).

It belongs to the 4Fe4S bacterial-type ferredoxin family. RnfB subfamily. In terms of assembly, the complex is composed of six subunits: RnfA, RnfB, RnfC, RnfD, RnfE and RnfG. The cofactor is [4Fe-4S] cluster.

Its subcellular location is the cell inner membrane. Functionally, part of a membrane-bound complex that couples electron transfer with translocation of ions across the membrane. This Shewanella sp. (strain ANA-3) protein is Ion-translocating oxidoreductase complex subunit B.